We begin with the raw amino-acid sequence, 309 residues long: Porphobilinogen deaminase (309 aa).

S-(dipyrrolylmethanemethyl)cysteine is present on Cys-241.

This sequence belongs to the HMBS family. Monomer. The cofactor is dipyrromethane.

The enzyme catalyses 4 porphobilinogen + H2O = hydroxymethylbilane + 4 NH4(+). It participates in porphyrin-containing compound metabolism; protoporphyrin-IX biosynthesis; coproporphyrinogen-III from 5-aminolevulinate: step 2/4. Its function is as follows. Tetrapolymerization of the monopyrrole PBG into the hydroxymethylbilane pre-uroporphyrinogen in several discrete steps. This is Porphobilinogen deaminase from Geobacillus kaustophilus (strain HTA426).